The chain runs to 179 residues: Large ribosomal subunit protein uL5 (179 aa).

Belongs to the universal ribosomal protein uL5 family. As to quaternary structure, part of the 50S ribosomal subunit; part of the 5S rRNA/L5/L18/L25 subcomplex. Contacts the 5S rRNA and the P site tRNA. Forms a bridge to the 30S subunit in the 70S ribosome.

Its function is as follows. This is one of the proteins that bind and probably mediate the attachment of the 5S RNA into the large ribosomal subunit, where it forms part of the central protuberance. In the 70S ribosome it contacts protein S13 of the 30S subunit (bridge B1b), connecting the 2 subunits; this bridge is implicated in subunit movement. Contacts the P site tRNA; the 5S rRNA and some of its associated proteins might help stabilize positioning of ribosome-bound tRNAs. The polypeptide is Large ribosomal subunit protein uL5 (Xylella fastidiosa (strain M23)).